The following is a 635-amino-acid chain: Transaminated amino acid decarboxylase (635 aa).

A Glycyl lysine isopeptide (Lys-Gly) (interchain with G-Cter in ubiquitin) cross-link involves residue K588.

It belongs to the TPP enzyme family. The cofactor is Mg(2+). Thiamine diphosphate serves as cofactor.

The protein localises to the cytoplasm. It carries out the reaction 4-methyl-2-oxopentanoate + H(+) = 3-methylbutanal + CO2. The catalysed reaction is (S)-3-methyl-2-oxopentanoate + H(+) = 2-methylbutanal + CO2. The enzyme catalyses indole-3-pyruvate + H(+) = indole-3-acetaldehyde + CO2. It catalyses the reaction 3-phenylpyruvate + H(+) = 2-phenylacetaldehyde + CO2. It carries out the reaction 4-methylsulfanyl-2-oxobutanoate + H(+) = 3-methylsulfanylpropanal + CO2. The catalysed reaction is 3-(4-hydroxyphenyl)pyruvate + H(+) = (4-hydroxyphenyl)acetaldehyde + CO2. Its pathway is amino-acid degradation; Ehrlich pathway. In terms of biological role, one of five 2-oxo acid decarboxylases (PDC1, PDC5, PDC6, ARO10, and THI3) involved in amino acid catabolism. The enzyme catalyzes the decarboxylation of amino acids, which, in a first step, have been transaminated to the corresponding 2-oxo acids (alpha-keto-acids). In a third step, the resulting aldehydes are reduced to alcohols, collectively referred to as fusel oils or alcohols. Its preferred substrates are the transaminated amino acids derived from phenylalanine (phenylpyruvate), tryptophan (3-(indol-3-yl)pyruvate), and probably tyrosine (4-hydroxyphenylpyruvate), but also isoleucine ((3S)-3-methyl-2-oxopentanoate, also alpha-keto-beta-methylvalerate) and methionine (4-methylthio-2-oxobutanoate), whereas transaminated leucine (4-methyl-2-oxopentanoate, also alpha-keto-isocaproate) is a low efficiency substrate and transaminated valine and pyruvate are no substrates. In analogy to the pyruvate decarboxylases the enzyme may in a side-reaction catalyze condensation (or carboligation) reactions leading to the formation of 2-hydroxy ketone, collectively called acyloins. This chain is Transaminated amino acid decarboxylase (ARO10), found in Saccharomyces cerevisiae (strain ATCC 204508 / S288c) (Baker's yeast).